The sequence spans 301 residues: Mitochondrial import receptor subunit TOM40 homolog (301 aa).

The span at 1–19 (MATPTESELASPIPQTNPG) shows a compositional bias: polar residues. The tract at residues 1–20 (MATPTESELASPIPQTNPGS) is disordered.

Belongs to the Tom40 family. Forms part of the preprotein translocase complex of the outer mitochondrial membrane (TOM complex). Interacts with mitochondrial targeting sequences. In terms of tissue distribution, ubiquitously expressed, but highly expressed in the pharyngeal muscles, the nerve ring, the intestine, gonadal sheath and in the tail hypodermis.

The protein resides in the mitochondrion outer membrane. Functionally, channel-forming protein essential for import of protein precursors into mitochondria. Specifically required for nnt-1 accumulation in the mitochondria and may be involved in the secretion of daf-28/insulin from the mitochondria. Required for embryonic and larval development. The sequence is that of Mitochondrial import receptor subunit TOM40 homolog from Caenorhabditis elegans.